The following is a 1163-amino-acid chain: Carbamoyl phosphate synthase large chain (1163 aa).

The interval 1–456 (MPKRQDIKSI…SLQKALRGLE (456 aa)) is carboxyphosphate synthetic domain. ATP is bound at residue Arg129. Residues 148-170 (LANATDIKDHDRKSHEAERSALK) form a disordered region. Residues 153–170 (DIKDHDRKSHEAERSALK) are compositionally biased toward basic and acidic residues. The ATP-grasp 1 domain maps to 185–381 (LENQWNLGEG…IAKIAAKLAV (197 aa)). Residues Arg222, Gly228, Gly229, Glu261, Val263, Glu268, Gly294, Val295, His296, Gln338, and Glu352 each coordinate ATP. Gln338, Glu352, and Asn354 together coordinate Mg(2+). Mn(2+) is bound by residues Gln338, Glu352, and Asn354. The interval 457–614 (TGLTGLDEIE…PFVGAARSEA (158 aa)) is oligomerization domain. A carbamoyl phosphate synthetic domain region spans residues 615-1026 (QVSDRKKVVI…AFAKSQLGAG (412 aa)). Residues 743-955 (QKLLMKLDLN…IAKIAARVMA (213 aa)) enclose the ATP-grasp 2 domain. Arg779, Ser839, Leu841, Glu846, Gly871, Ile872, His873, Ser874, Gln914, and Glu926 together coordinate ATP. Residues Gln914, Glu926, and Asn928 each contribute to the Mg(2+) site. Mn(2+)-binding residues include Gln914, Glu926, and Asn928. The 137-residue stretch at 1027-1163 (VDLPRDGTVF…VRPLQSYFET (137 aa)) folds into the MGS-like domain. Residues 1027–1163 (VDLPRDGTVF…VRPLQSYFET (137 aa)) are allosteric domain.

The protein belongs to the CarB family. As to quaternary structure, composed of two chains; the small (or glutamine) chain promotes the hydrolysis of glutamine to ammonia, which is used by the large (or ammonia) chain to synthesize carbamoyl phosphate. Tetramer of heterodimers (alpha,beta)4. The cofactor is Mg(2+). It depends on Mn(2+) as a cofactor.

It catalyses the reaction hydrogencarbonate + L-glutamine + 2 ATP + H2O = carbamoyl phosphate + L-glutamate + 2 ADP + phosphate + 2 H(+). The catalysed reaction is hydrogencarbonate + NH4(+) + 2 ATP = carbamoyl phosphate + 2 ADP + phosphate + 2 H(+). It participates in amino-acid biosynthesis; L-arginine biosynthesis; carbamoyl phosphate from bicarbonate: step 1/1. It functions in the pathway pyrimidine metabolism; UMP biosynthesis via de novo pathway; (S)-dihydroorotate from bicarbonate: step 1/3. In terms of biological role, large subunit of the glutamine-dependent carbamoyl phosphate synthetase (CPSase). CPSase catalyzes the formation of carbamoyl phosphate from the ammonia moiety of glutamine, carbonate, and phosphate donated by ATP, constituting the first step of 2 biosynthetic pathways, one leading to arginine and/or urea and the other to pyrimidine nucleotides. The large subunit (synthetase) binds the substrates ammonia (free or transferred from glutamine from the small subunit), hydrogencarbonate and ATP and carries out an ATP-coupled ligase reaction, activating hydrogencarbonate by forming carboxy phosphate which reacts with ammonia to form carbamoyl phosphate. The protein is Carbamoyl phosphate synthase large chain of Rhizobium meliloti (strain 1021) (Ensifer meliloti).